The chain runs to 514 residues: Protein Tube (514 aa).

Disordered stretches follow at residues 226–250, 255–274, 324–343, 366–385, and 413–514; these read VPQQ…RSSR, TASN…SNTA, LDAG…STST, ASDA…VPDM, and NGAK…ELQQ. Residues 259–274 are compositionally biased toward low complexity; the sequence is VAPTTASNAPSASNTA. A compositionally biased stretch (polar residues) spans 422–433; sequence ADNNSSGTNSLS. Residues 434 to 460 are compositionally biased toward acidic residues; it reads NDDDEQKEDDDDDDDDDVVDVDDEEAD. Residues 477–514 are compositionally biased toward polar residues; that stretch reads TTVTCTSGENSFEFTNDSSSASNDDYTNNIPNLSELQQ.

In terms of tissue distribution, maternal and zygotic gene product.

It is found in the cytoplasm. Functionally, required for the determination of embryonic dorsoventral polarity. Is involved in transduction of information regulating nuclear import of dorsal protein. The protein is Protein Tube (tub) of Drosophila virilis (Fruit fly).